The following is a 130-amino-acid chain: Small ribosomal subunit protein uS11c (130 aa).

It belongs to the universal ribosomal protein uS11 family. Part of the 30S ribosomal subunit.

It localises to the plastid. In Aneura mirabilis (Parasitic liverwort), this protein is Small ribosomal subunit protein uS11c.